The chain runs to 370 residues: Probable aspartic-type endopeptidase ARB_04018 (370 aa).

The signal sequence occupies residues 1 to 21 (MWHSPFSTAFTLFLGFFTLTL). N-linked (GlcNAc...) asparagine glycosylation is found at N80 and N102. The Peptidase A1 domain occupies 94-367 (FVNEITIGND…DHDGPKMGFA (274 aa)). D110 is an active-site residue. An N-linked (GlcNAc...) asparagine glycan is attached at N251. D261 is an active-site residue. An N-linked (GlcNAc...) asparagine glycan is attached at N298.

This sequence belongs to the peptidase A1 family.

The protein resides in the secreted. In terms of biological role, probable aspartic-type endopeptidase which contributes to virulence. The chain is Probable aspartic-type endopeptidase ARB_04018 from Arthroderma benhamiae (strain ATCC MYA-4681 / CBS 112371) (Trichophyton mentagrophytes).